The primary structure comprises 208 residues: Hypoxanthine-guanine phosphoribosyltransferase (208 aa).

GMP contacts are provided by residues K63, 122-130, K154, and D182; that span reads EDIVDSAIT. The Proton acceptor role is filled by D126. Position 182 (D182) interacts with Mg(2+).

This sequence belongs to the purine/pyrimidine phosphoribosyltransferase family. It depends on Mg(2+) as a cofactor.

Its subcellular location is the cytoplasm. It catalyses the reaction IMP + diphosphate = hypoxanthine + 5-phospho-alpha-D-ribose 1-diphosphate. The enzyme catalyses GMP + diphosphate = guanine + 5-phospho-alpha-D-ribose 1-diphosphate. It participates in purine metabolism; IMP biosynthesis via salvage pathway; IMP from hypoxanthine: step 1/1. Its function is as follows. Converts guanine to guanosine monophosphate, and hypoxanthine to inosine monophosphate. Transfers the 5-phosphoribosyl group from 5-phosphoribosylpyrophosphate onto the purine. Plays a central role in the generation of purine nucleotides through the purine salvage pathway. This is Hypoxanthine-guanine phosphoribosyltransferase (HGPRT) from Crithidia fasciculata.